Consider the following 49-residue polypeptide: Large ribosomal subunit protein bL33A (49 aa).

This sequence belongs to the bacterial ribosomal protein bL33 family.

This chain is Large ribosomal subunit protein bL33A, found in Geobacillus thermodenitrificans (strain NG80-2).